We begin with the raw amino-acid sequence, 310 residues long: Carbamate kinase 1 (310 aa).

This sequence belongs to the carbamate kinase family.

The protein resides in the cytoplasm. The enzyme catalyses hydrogencarbonate + NH4(+) + ATP = carbamoyl phosphate + ADP + H2O + H(+). It functions in the pathway metabolic intermediate metabolism; carbamoyl phosphate degradation; CO(2) and NH(3) from carbamoyl phosphate: step 1/1. This chain is Carbamate kinase 1 (arcC1), found in Staphylococcus aureus (strain COL).